The primary structure comprises 278 residues: Phosphatidylglycerol--prolipoprotein diacylglyceryl transferase (278 aa).

4 helical membrane passes run 19–39 (WYGILMATGVLVATLMAINEG), 49–69 (FIDFLLWAVPIGFIGARIYYV), 86–106 (IWNGGIAIYGGLIAGLIVLLI), and 112–132 (MLPPFLMLDIIAPGVMAAQVI). R134 serves as a coordination point for a 1,2-diacyl-sn-glycero-3-phospho-(1'-sn-glycerol). 3 helical membrane passes run 174–194 (QPTYLYESTLNLIGLILILSL), 204–224 (GEIFLSYVIWYSAVRFFVEGM), and 235–255 (IRVSQALSLILFFGAIILWIY).

This sequence belongs to the Lgt family.

Its subcellular location is the cell membrane. The enzyme catalyses L-cysteinyl-[prolipoprotein] + a 1,2-diacyl-sn-glycero-3-phospho-(1'-sn-glycerol) = an S-1,2-diacyl-sn-glyceryl-L-cysteinyl-[prolipoprotein] + sn-glycerol 1-phosphate + H(+). The protein operates within protein modification; lipoprotein biosynthesis (diacylglyceryl transfer). Its function is as follows. Catalyzes the transfer of the diacylglyceryl group from phosphatidylglycerol to the sulfhydryl group of the N-terminal cysteine of a prolipoprotein, the first step in the formation of mature lipoproteins. The polypeptide is Phosphatidylglycerol--prolipoprotein diacylglyceryl transferase (Lactobacillus johnsonii (strain CNCM I-12250 / La1 / NCC 533)).